The following is a 240-amino-acid chain: MNIISEHGFRIDGRRPAQIRNINTRLGLNRNAEGSCYLEHGNTKVLCAVYGPYEGKSSKRIEDKCAIVCQYSATKFSGLERKNRTRGDRKSTEISRLLEKAFESVILTEAFPRSQLDIFCEVIQGDGSNLAACVNATSLALADAGIPMKGIASAATCGVVDGKPIVDLTSREETDLLPRVTLATICGRDEVILVELQNRLHIDHLSTVMDAAKATCADVYECLAVVAQQHLKACAPILGN.

Belongs to the RNase PH family. As to quaternary structure, component of the RNA exosome complex.

The protein resides in the cytoplasm. It localises to the nucleus. It is found in the nucleolus. Its subcellular location is the nucleoplasm. Non-catalytic component of the RNA exosome complex which has 3'-&gt;5' exoribonuclease activity and participates in a multitude of cellular RNA processing and degradation events. In Caenorhabditis elegans, this protein is Putative exosome complex component RRP41 (exos-4.1).